A 272-amino-acid chain; its full sequence is MFGFEIQPVRSRNWEIEEEEDQEVVSVEIPKPSISFVNDNYKLEFNNNNDTPFNIIVSTNGSPSIFVKGCFESNQFDEIADISYSDIKPLKTTNTNTVLNNKCTVYRHKIEKSMIFITVQYDLPSERCFGFTELVLNTFKNVSQVLVLDKILNTHYLSQNYTHPIPPFTRAIFNSLFKNDYSLTPLESSNIIENLSASFLTICQVKYIPACSILNLYESHLNIESVQSFTPIVKSIYPQLFNNSSLKQEDITSQFKLMINALNKRNDKGMYM.

This sequence belongs to the PSMG1 family. Forms a heterodimer with psmg2.

Chaperone protein which promotes assembly of the 20S proteasome as part of a heterodimer with psmg2. This Dictyostelium discoideum (Social amoeba) protein is Proteasome assembly chaperone 1 (psmG1).